Consider the following 57-residue polypeptide: Small ribosomal subunit protein bS21 (57 aa).

The disordered stretch occupies residues 32-57 (VRKRKHFEKPSVKRKKKSEAARKRKF). The span at 33 to 57 (RKRKHFEKPSVKRKKKSEAARKRKF) shows a compositional bias: basic residues.

This sequence belongs to the bacterial ribosomal protein bS21 family.

This Shouchella clausii (strain KSM-K16) (Alkalihalobacillus clausii) protein is Small ribosomal subunit protein bS21.